Here is a 565-residue protein sequence, read N- to C-terminus: Sensor histidine kinase MtrB (565 aa).

A compositionally biased stretch (basic residues) spans 1–13 (MMWGSRRRTRSRW). The segment at 1–21 (MMWGSRRRTRSRWGRSGPMTR) is disordered. 2 consecutive transmembrane segments (helical) span residues 42–62 (VVALTLGLSLAVILALGFVLT) and 213–233 (GTMITGGAVLLVLLAGIALLV). The region spanning 235-287 (RQVVVPVRSASRIAERFAEGHLSERMPVRGEDDMARLAMSFNDMAESLSRQIT) is the HAMP domain. The region spanning 302 to 519 (DVSHELRTPL…CFRLTLPLVR (218 aa)) is the Histidine kinase domain. A Phosphohistidine; by autocatalysis modification is found at His-305. A disordered region spans residues 524–565 (TTSPLPMKPIPQPSPSGGQSPSTGPQHAKDRARQREHAERSL). Over residues 538–549 (PSGGQSPSTGPQ) the composition is skewed to low complexity. A compositionally biased stretch (basic and acidic residues) spans 550 to 565 (HAKDRARQREHAERSL).

Its subcellular location is the cell membrane. The catalysed reaction is ATP + protein L-histidine = ADP + protein N-phospho-L-histidine.. Member of the two-component regulatory system MtrA/MtrB. Seems to function as a membrane-associated protein kinase that phosphorylates MtrA in response to environmental signals. The polypeptide is Sensor histidine kinase MtrB (mtrB) (Mycolicibacterium paratuberculosis (strain ATCC BAA-968 / K-10) (Mycobacterium paratuberculosis)).